The primary structure comprises 925 residues: Protein translocase subunit SecA (925 aa).

ATP-binding positions include Gln-87, 105–109 (GEGKT), and Asp-512. Positions 910, 912, 921, and 922 each coordinate Zn(2+).

The protein belongs to the SecA family. Monomer and homodimer. Part of the essential Sec protein translocation apparatus which comprises SecA, SecYEG and auxiliary proteins SecDF-YajC and YidC. Zn(2+) is required as a cofactor.

It is found in the cell inner membrane. The protein localises to the cytoplasm. It carries out the reaction ATP + H2O + cellular proteinSide 1 = ADP + phosphate + cellular proteinSide 2.. Functionally, part of the Sec protein translocase complex. Interacts with the SecYEG preprotein conducting channel. Has a central role in coupling the hydrolysis of ATP to the transfer of proteins into and across the cell membrane, serving both as a receptor for the preprotein-SecB complex and as an ATP-driven molecular motor driving the stepwise translocation of polypeptide chains across the membrane. The sequence is that of Protein translocase subunit SecA from Psychrobacter sp. (strain PRwf-1).